The sequence spans 530 residues: Zinc finger protein ZIC 4 (530 aa).

Composition is skewed to basic residues over residues 31–40 (HHPHHHHHPP) and 97–113 (NPHHRHHHHHHHHHHMA). 2 disordered regions span residues 31–50 (HHPHHHHHPPHLPQSVTGYP) and 87–138 (PGAL…SYSS). The segment at 284 to 317 (LICKWIEEDQLPKKLCSKTFSTMHELVTHVTVEH) adopts a C2H2-type 1; atypical zinc-finger fold. Residues 326 to 353 (HICFWEECPREGKPFKAKYKLVNHIRVH) form a C2H2-type 2; atypical zinc finger. C2H2-type zinc fingers lie at residues 359–383 (FPCPFPGCGKVFARSENLKIHKRTH), 389–413 (FKCEFEGCDRRFANSSDRKKHSHVH), and 419–443 (YNCKVRGCDKSYTHPSSLRKHMKVH). The tract at residues 432-530 (HPSSLRKHMK…YSNWQATNTF (99 aa)) is disordered. A compositionally biased stretch (basic residues) spans 435–444 (SLRKHMKVHC). 2 stretches are compositionally biased toward low complexity: residues 455–467 (SSIPSLVSPSSDS) and 474–485 (TSSQPEPPTSSQ). Residues 520–530 (SYSNWQATNTF) show a composition bias toward polar residues.

Belongs to the GLI C2H2-type zinc-finger protein family. As to expression, at mid-gastrula stage (stage 11.5), weakly expressed in the prospective neural fold. Expressed in the neural plate border region at early neurula stage (stage 15) with strongest expression in the prospective regions of the hyoid and branchial crests. Expression in the dorsal central nervous system (CNS) continues through late neurula stage and early tail bud stages with expression strongest in the olfactory placode and expression levels increasing as development progresses. Becomes expressed in somites.

It is found in the nucleus. Functionally, may bind to DNA. Induces neural and neural crest differentiation. Does not induce anterior neural tissue. This chain is Zinc finger protein ZIC 4 (zic4), found in Xenopus laevis (African clawed frog).